Consider the following 84-residue polypeptide: Putative membrane protein insertion efficiency factor (84 aa).

The protein belongs to the UPF0161 family.

Its subcellular location is the cell inner membrane. Could be involved in insertion of integral membrane proteins into the membrane. This chain is Putative membrane protein insertion efficiency factor, found in Shewanella baltica (strain OS195).